Reading from the N-terminus, the 448-residue chain is Serine--tRNA ligase (448 aa).

255–257 (TSE) is an L-serine binding site. 286 to 288 (RSE) is an ATP binding site. E309 contributes to the L-serine binding site. ATP is bound at residue 373–376 (EISS). Residue S408 participates in L-serine binding.

This sequence belongs to the class-II aminoacyl-tRNA synthetase family. Type-1 seryl-tRNA synthetase subfamily. As to quaternary structure, homodimer. The tRNA molecule binds across the dimer.

It localises to the cytoplasm. The enzyme catalyses tRNA(Ser) + L-serine + ATP = L-seryl-tRNA(Ser) + AMP + diphosphate + H(+). It carries out the reaction tRNA(Sec) + L-serine + ATP = L-seryl-tRNA(Sec) + AMP + diphosphate + H(+). The protein operates within aminoacyl-tRNA biosynthesis; selenocysteinyl-tRNA(Sec) biosynthesis; L-seryl-tRNA(Sec) from L-serine and tRNA(Sec): step 1/1. Functionally, catalyzes the attachment of serine to tRNA(Ser). Is also able to aminoacylate tRNA(Sec) with serine, to form the misacylated tRNA L-seryl-tRNA(Sec), which will be further converted into selenocysteinyl-tRNA(Sec). This Bordetella petrii (strain ATCC BAA-461 / DSM 12804 / CCUG 43448) protein is Serine--tRNA ligase.